The following is a 661-amino-acid chain: UvrABC system protein C (661 aa).

Residues 26–105 form the GIY-YIG domain; sequence AEPGCYLMRD…IKNHQPHFNV (80 aa). The region spanning 215–250 is the UVR domain; it reads DELQNLLQEQMHKYADRTDYESAARVRDQLQGLDQL.

Belongs to the UvrC family. As to quaternary structure, interacts with UvrB in an incision complex.

It is found in the cytoplasm. Functionally, the UvrABC repair system catalyzes the recognition and processing of DNA lesions. UvrC both incises the 5' and 3' sides of the lesion. The N-terminal half is responsible for the 3' incision and the C-terminal half is responsible for the 5' incision. In Synechococcus sp. (strain CC9902), this protein is UvrABC system protein C.